A 470-amino-acid polypeptide reads, in one-letter code: Aspartate-semialdehyde dehydrogenase 1 (470 aa).

NAD(+) is bound by residues Thr145 and Lys171. Asp243 is a catalytic residue. Gly245 is an NAD(+) binding site. The active site involves Cys277. Residue Glu371 coordinates NAD(+).

This sequence belongs to the aldehyde dehydrogenase family.

The enzyme catalyses L-aspartate 4-semialdehyde + NAD(+) + H2O = L-aspartate + NADH + 2 H(+). Dehydrogenase involved in the degradation of canavanine, the delta-oxa-analog of arginine, allowing growth on canavanine as sole nitrogen and carbon source. Probably catalyzes the NAD(+)-dependent oxidation of L-aspartate-semialdehyde to L-aspartate. The protein is Aspartate-semialdehyde dehydrogenase 1 of Pseudomonas canavaninivorans.